Reading from the N-terminus, the 143-residue chain is uncharacterized protein (143 aa).

This is an uncharacterized protein from Saccharomyces cerevisiae (strain ATCC 204508 / S288c) (Baker's yeast).